The sequence spans 228 residues: 2-C-methyl-D-erythritol 4-phosphate cytidylyltransferase (228 aa).

Belongs to the IspD/TarI cytidylyltransferase family. IspD subfamily.

The catalysed reaction is 2-C-methyl-D-erythritol 4-phosphate + CTP + H(+) = 4-CDP-2-C-methyl-D-erythritol + diphosphate. Its pathway is isoprenoid biosynthesis; isopentenyl diphosphate biosynthesis via DXP pathway; isopentenyl diphosphate from 1-deoxy-D-xylulose 5-phosphate: step 2/6. Catalyzes the formation of 4-diphosphocytidyl-2-C-methyl-D-erythritol from CTP and 2-C-methyl-D-erythritol 4-phosphate (MEP). This is 2-C-methyl-D-erythritol 4-phosphate cytidylyltransferase from Geobacillus kaustophilus (strain HTA426).